We begin with the raw amino-acid sequence, 309 residues long: UDP-N-acetylenolpyruvoylglucosamine reductase (309 aa).

Residues 34–198 (RVGGPAEVMF…VRARLHARPG (165 aa)) form the FAD-binding PCMH-type domain. The active site involves Arg178. Residue Ser227 is the Proton donor of the active site. Glu297 is a catalytic residue.

It belongs to the MurB family. Requires FAD as cofactor.

It localises to the cytoplasm. It catalyses the reaction UDP-N-acetyl-alpha-D-muramate + NADP(+) = UDP-N-acetyl-3-O-(1-carboxyvinyl)-alpha-D-glucosamine + NADPH + H(+). The protein operates within cell wall biogenesis; peptidoglycan biosynthesis. Its function is as follows. Cell wall formation. The polypeptide is UDP-N-acetylenolpyruvoylglucosamine reductase (Acidiphilium cryptum (strain JF-5)).